Consider the following 340-residue polypeptide: CMP-N-acetylneuraminate-beta-galactosamide-alpha-2,3-sialyltransferase 1 (340 aa).

The Cytoplasmic portion of the chain corresponds to 1–13; sequence MVTLRKRTLKVLT. Residues 14–34 form a helical; Signal-anchor for type II membrane protein membrane-spanning segment; sequence FLVLFIFLTSFFLNYSHTMVA. At 35–340 the chain is on the lumenal side; the sequence is TTWFPKQMVL…INKIRIFKGR (306 aa). 3 cysteine pairs are disulfide-bonded: Cys59-Cys64, Cys61-Cys139, and Cys142-Cys281. Asn79 is a glycosylation site (N-linked (GlcNAc...) asparagine). Residue Gln105 participates in substrate binding. An N-linked (GlcNAc...) asparagine glycan is attached at Asn114. Substrate-binding residues include Asn147 and Asn170. An N-linked (GlcNAc...) asparagine glycan is attached at Asn201. Substrate is bound by residues Tyr230, Tyr266, Gly270, Gly290, His299, and His316. The N-linked (GlcNAc...) asparagine glycan is linked to Asn323.

The protein belongs to the glycosyltransferase 29 family. In terms of processing, the soluble form derives from the membrane form by proteolytic processing.

It is found in the golgi apparatus. Its subcellular location is the golgi stack membrane. It localises to the trans-Golgi network membrane. The protein localises to the secreted. The catalysed reaction is a beta-D-galactosyl-(1-&gt;3)-N-acetyl-alpha-D-galactosaminyl derivative + CMP-N-acetyl-beta-neuraminate = an N-acetyl-alpha-neuraminyl-(2-&gt;3)-beta-D-galactosyl-(1-&gt;3)-N-acetyl-alpha-D-galactosaminyl derivative + CMP + H(+). It carries out the reaction a ganglioside GM1 + CMP-N-acetyl-beta-neuraminate = a ganglioside GD1a + CMP + H(+). The enzyme catalyses a ganglioside GM1 (d18:1(4E)) + CMP-N-acetyl-beta-neuraminate = a ganglioside GD1a (d18:1(4E)) + CMP + H(+). It catalyses the reaction ganglioside GM1 (d18:1(4E)/18:0) + CMP-N-acetyl-beta-neuraminate = ganglioside GD1a (18:1(4E)/18:0) + CMP + H(+). The catalysed reaction is a ganglioside GA1 + CMP-N-acetyl-beta-neuraminate = a ganglioside GM1b + CMP + H(+). It carries out the reaction a ganglioside GA1 (d18:1(4E)) + CMP-N-acetyl-beta-neuraminate = a ganglioside GM1b (d18:1(4E)) + CMP + H(+). The enzyme catalyses a ganglioside GD1b + CMP-N-acetyl-beta-neuraminate = a ganglioside GT1b + CMP + H(+). It catalyses the reaction a 3-O-[beta-D-galactosyl-(1-&gt;3)-N-acetyl-alpha-D-galactosaminyl]-L-threonyl-[protein] + CMP-N-acetyl-beta-neuraminate = a 3-O-[N-acetyl-alpha-neuraminyl-(2-&gt;3)-beta-D-galactosyl-(1-&gt;3)-N-acetyl-alpha-D-galactosaminyl]-L-threonyl-[protein] + CMP + H(+). The catalysed reaction is a 3-O-[beta-D-galactosyl-(1-&gt;3)-N-acetyl-alpha-D-galactosaminyl]-L-seryl-[protein] + CMP-N-acetyl-beta-neuraminate = 3-O-[N-acetyl-alpha-neuraminyl-(2-&gt;3)-beta-D-galactosyl-(1-&gt;3)-N-acetyl-alpha-D-galactosaminyl]-L-seryl-[protein] + CMP + H(+). It functions in the pathway protein modification; protein glycosylation. Its pathway is glycolipid biosynthesis. Its function is as follows. A beta-galactoside alpha2-&gt;3 sialyltransferase involved in terminal sialylation of glycoproteins and glycolipids. Catalyzes the transfer of sialic acid (N-acetyl-neuraminic acid; Neu5Ac) from the nucleotide sugar donor CMP-Neu5Ac onto acceptor Galbeta-(1-&gt;3)-GalNAc-terminated glycoconjugates through an alpha2-3 linkage. Adds sialic acid to the core 1 O-glycan, Galbeta-(1-&gt;3)-GalNAc-O-Ser/Thr, which is a major structure of mucin-type O-glycans. As part of a homeostatic mechanism that regulates CD8-positive T cell numbers, sialylates core 1 O-glycans of T cell glycoproteins, SPN/CD43 and PTPRC/CD45. Prevents premature apoptosis of thymic CD8-positive T cells prior to peripheral emigration, whereas in the secondary lymphoid organs controls the survival of CD8-positive memory T cells generated following a successful immune response. Transfers sialic acid to asialofetuin, presumably onto Galbeta-(1-&gt;3)-GalNAc-O-Ser. Sialylates GM1a, GA1 and GD1b gangliosides to form GD1a, GM1b and GT1b, respectively. The sequence is that of CMP-N-acetylneuraminate-beta-galactosamide-alpha-2,3-sialyltransferase 1 (ST3GAL1) from Pan troglodytes (Chimpanzee).